The chain runs to 383 residues: 8-amino-7-oxononanoate synthase (383 aa).

Residue arginine 21 coordinates substrate. Residue 108–109 (GY) coordinates pyridoxal 5'-phosphate. Histidine 133 serves as a coordination point for substrate. Pyridoxal 5'-phosphate-binding residues include serine 179, histidine 207, and threonine 233. Lysine 236 bears the N6-(pyridoxal phosphate)lysine mark. Threonine 350 lines the substrate pocket.

The protein belongs to the class-II pyridoxal-phosphate-dependent aminotransferase family. BioF subfamily. As to quaternary structure, homodimer. The cofactor is pyridoxal 5'-phosphate.

The catalysed reaction is 6-carboxyhexanoyl-[ACP] + L-alanine + H(+) = (8S)-8-amino-7-oxononanoate + holo-[ACP] + CO2. The protein operates within cofactor biosynthesis; biotin biosynthesis. Functionally, catalyzes the decarboxylative condensation of pimeloyl-[acyl-carrier protein] and L-alanine to produce 8-amino-7-oxononanoate (AON), [acyl-carrier protein], and carbon dioxide. The polypeptide is 8-amino-7-oxononanoate synthase (Serratia proteamaculans (strain 568)).